The chain runs to 179 residues: SCAN domain-containing protein 1 (179 aa).

The disordered stretch occupies residues 1-104; sequence MAATEPILAA…PGPAGSRLGP (104 aa). Residues 52–80 show a composition bias toward low complexity; that stretch reads SPNAAVPEAIPTPRAAASAALELPLGPAP. One can recognise an SCAN box domain in the interval 108 to 166; sequence RQRFRQFRYQDAAGPREAFRQLRELSRQWLRPDIRTKEQIVEMLVQEQLLAILPEAARA.

As to quaternary structure, interacts with ZNF202.

The protein resides in the nucleus. May regulate transcriptional activity. The sequence is that of SCAN domain-containing protein 1 (SCAND1) from Homo sapiens (Human).